The following is a 217-amino-acid chain: Deoxyribose-phosphate aldolase (217 aa).

Asp95 serves as the catalytic Proton donor/acceptor. The active-site Schiff-base intermediate with acetaldehyde is the Lys156. Catalysis depends on Lys184, which acts as the Proton donor/acceptor.

The protein belongs to the DeoC/FbaB aldolase family. DeoC type 1 subfamily.

It is found in the cytoplasm. It carries out the reaction 2-deoxy-D-ribose 5-phosphate = D-glyceraldehyde 3-phosphate + acetaldehyde. Its pathway is carbohydrate degradation; 2-deoxy-D-ribose 1-phosphate degradation; D-glyceraldehyde 3-phosphate and acetaldehyde from 2-deoxy-alpha-D-ribose 1-phosphate: step 2/2. Catalyzes a reversible aldol reaction between acetaldehyde and D-glyceraldehyde 3-phosphate to generate 2-deoxy-D-ribose 5-phosphate. This is Deoxyribose-phosphate aldolase from Thermosynechococcus vestitus (strain NIES-2133 / IAM M-273 / BP-1).